Reading from the N-terminus, the 456-residue chain is Ribonuclease inhibitor (456 aa).

Met-1 is subject to N-acetylmethionine. LRR repeat units lie at residues 15-43 (WTEL…CKDI), 44-71 (GSAL…VHLV), 72-100 (LQGL…CGVL), 101-128 (PSTL…LRLL), 129-157 (CEGL…CEPL), 158-185 (ASVL…ARVL), 186-214 (GQGL…CKDL), 215-242 (CGIV…IAEL), 243-271 (CPGL…CRDL), 272-299 (CRVL…ARLL), 300-328 (CESL…CQHV), 329-356 (SLML…IQEL), 357-385 (CQAL…CSSL), 386-413 (ASLL…VLQL), and 414-442 (LGSL…EDRL). Ser-86 is subject to Phosphoserine.

As to quaternary structure, forms high-affinity heterodimers with RNASE1, ANG and RNASE2.

The protein resides in the cytoplasm. The protein localises to the nucleus. In terms of biological role, ribonuclease inhibitor which inhibits RNASE1, RNASE2 and angiogenin (ANG). May play a role in redox homeostasis. Required to inhibit the cytotoxic tRNA ribonuclease activity of ANG in the cytoplasm in absence of stress. Relocates to the nucleus in response to stress, relieving inhibition of ANG in the cytoplasm, and inhibiting the angiogenic activity of ANG in the nucleus. This Sus scrofa (Pig) protein is Ribonuclease inhibitor (RNH1).